The sequence spans 568 residues: Peptidoglycan D,D-transpeptidase FtsI (568 aa).

A helical membrane pass occupies residues 19–39 (FVTLCSIVFLFLVILTLRIIF). Ser302 (acyl-ester intermediate) is an active-site residue.

Belongs to the transpeptidase family. FtsI subfamily.

It is found in the cell inner membrane. It catalyses the reaction Preferential cleavage: (Ac)2-L-Lys-D-Ala-|-D-Ala. Also transpeptidation of peptidyl-alanyl moieties that are N-acyl substituents of D-alanine.. It participates in cell wall biogenesis; peptidoglycan biosynthesis. Functionally, catalyzes cross-linking of the peptidoglycan cell wall at the division septum. The protein is Peptidoglycan D,D-transpeptidase FtsI of Buchnera aphidicola subsp. Schizaphis graminum (strain Sg).